Here is a 239-residue protein sequence, read N- to C-terminus: Protein GrpE (239 aa).

2 disordered regions span residues 1–53 and 210–239; these read MIEE…EDLK and GPGQQISQESEEKDKVDKDIDSEGSISEEN. 2 stretches are compositionally biased toward basic and acidic residues: residues 34–53 and 219–230; these read NEDKKLPDDNNEKIDAEDLK and SEEKDKVDKDID.

It belongs to the GrpE family. As to quaternary structure, homodimer.

The protein resides in the cytoplasm. Its function is as follows. Participates actively in the response to hyperosmotic and heat shock by preventing the aggregation of stress-denatured proteins, in association with DnaK and GrpE. It is the nucleotide exchange factor for DnaK and may function as a thermosensor. Unfolded proteins bind initially to DnaJ; upon interaction with the DnaJ-bound protein, DnaK hydrolyzes its bound ATP, resulting in the formation of a stable complex. GrpE releases ADP from DnaK; ATP binding to DnaK triggers the release of the substrate protein, thus completing the reaction cycle. Several rounds of ATP-dependent interactions between DnaJ, DnaK and GrpE are required for fully efficient folding. This chain is Protein GrpE, found in Prochlorococcus marinus (strain MIT 9515).